Here is a 308-residue protein sequence, read N- to C-terminus: Tryptophan 2,3-dioxygenase (308 aa).

Positions 1-37 (MKPPGDNAPAGCPFSGARAAQPAHEAPHVPGDAAGET) are disordered. Residues 77-81 (FIIQH), Y139, and R143 each bind substrate. H266 is a heme binding site. T280 is a binding site for substrate.

Belongs to the tryptophan 2,3-dioxygenase family. Homotetramer. It depends on heme as a cofactor.

The catalysed reaction is L-tryptophan + O2 = N-formyl-L-kynurenine. Its pathway is amino-acid degradation; L-tryptophan degradation via kynurenine pathway; L-kynurenine from L-tryptophan: step 1/2. Functionally, heme-dependent dioxygenase that catalyzes the oxidative cleavage of the L-tryptophan (L-Trp) pyrrole ring and converts L-tryptophan to N-formyl-L-kynurenine. Catalyzes the oxidative cleavage of the indole moiety. The sequence is that of Tryptophan 2,3-dioxygenase from Burkholderia ambifaria (strain MC40-6).